Consider the following 801-residue polypeptide: Ent-copalyl diphosphate synthase, chloroplastic (801 aa).

Lys-241 is a binding site for substrate. 2 residues coordinate Mg(2+): Asp-373 and Asp-375. A DXDD motif motif is present at residues 373 to 376 (DIDD). Position 459 (Lys-459) interacts with substrate.

Belongs to the terpene synthase family. Mg(2+) serves as cofactor.

The protein localises to the plastid. Its subcellular location is the chloroplast. The enzyme catalyses (2E,6E,10E)-geranylgeranyl diphosphate = ent-copalyl diphosphate. The protein operates within plant hormone biosynthesis; gibberellin biosynthesis. Its function is as follows. Catalyzes the conversion of geranylgeranyl diphosphate to the gibberellin precursor ent-copalyl diphosphate. The protein is Ent-copalyl diphosphate synthase, chloroplastic of Pisum sativum (Garden pea).